An 88-amino-acid chain; its full sequence is Protein K3 (88 aa).

The S1 motif domain occupies 8-82 (LPNAGDVIKG…TKGYIDVNYK (75 aa)). Binding to host EIF2AK2/PKR regions lie at residues 43–53 (SVKMHMDRYVE) and 74–79 (KGYIDV).

This sequence belongs to the poxviridae K3 protein family. As to quaternary structure, interacts with host EIF2AK2/PKR kinase.

Its function is as follows. Viral mimic of EIF2S1/eIF-2alpha that acts as a pseudosubstrate for EIF2AK2/PKR kinase. Inhibits therefore EIF2S1/eIF-2alpha phosphorylation by host EIF2AK2/PKR kinase and prevents protein synthesis shutoff. Determinant of host species specificity. The polypeptide is Protein K3 (Vaccinia virus (strain Western Reserve) (VACV)).